A 672-amino-acid chain; its full sequence is DNA ligase (672 aa).

Residues 32 to 36 (DSEYD), 81 to 82 (SL), and Glu114 contribute to the NAD(+) site. Residue Lys116 is the N6-AMP-lysine intermediate of the active site. The NAD(+) site is built by Arg137, Glu174, Lys291, and Lys315. Residues Cys409, Cys412, Cys427, and Cys433 each coordinate Zn(2+). The BRCT domain occupies 592-672 (VNENPFKEKT…EFLEIVNSFS (81 aa)).

This sequence belongs to the NAD-dependent DNA ligase family. LigA subfamily. It depends on Mg(2+) as a cofactor. The cofactor is Mn(2+).

It carries out the reaction NAD(+) + (deoxyribonucleotide)n-3'-hydroxyl + 5'-phospho-(deoxyribonucleotide)m = (deoxyribonucleotide)n+m + AMP + beta-nicotinamide D-nucleotide.. DNA ligase that catalyzes the formation of phosphodiester linkages between 5'-phosphoryl and 3'-hydroxyl groups in double-stranded DNA using NAD as a coenzyme and as the energy source for the reaction. It is essential for DNA replication and repair of damaged DNA. The sequence is that of DNA ligase from Actinobacillus succinogenes (strain ATCC 55618 / DSM 22257 / CCUG 43843 / 130Z).